The chain runs to 215 residues: Uracil-DNA glycosylase (215 aa).

Catalysis depends on Asp-59, which acts as the Proton acceptor.

This sequence belongs to the uracil-DNA glycosylase (UDG) superfamily. UNG family.

Its subcellular location is the cytoplasm. It carries out the reaction Hydrolyzes single-stranded DNA or mismatched double-stranded DNA and polynucleotides, releasing free uracil.. Functionally, excises uracil residues from the DNA which can arise as a result of misincorporation of dUMP residues by DNA polymerase or due to deamination of cytosine. The chain is Uracil-DNA glycosylase from Aliarcobacter butzleri (strain RM4018) (Arcobacter butzleri).